Reading from the N-terminus, the 185-residue chain is NAD(P)H-dependent FMN reductase PA1204 (185 aa).

Residues 13-20 (SLRSGSYN) and 81-83 (YNY) each bind FMN. 115–122 (SAGRFGTA) contacts NAD(+).

The protein belongs to the SsuE family. As to quaternary structure, homodimer. It depends on FMN as a cofactor.

Its function is as follows. Has NAD(P)H-dependent FMN reductase activity. This Pseudomonas aeruginosa (strain ATCC 15692 / DSM 22644 / CIP 104116 / JCM 14847 / LMG 12228 / 1C / PRS 101 / PAO1) protein is NAD(P)H-dependent FMN reductase PA1204.